A 122-amino-acid polypeptide reads, in one-letter code: Large ribosomal subunit protein uL14 (122 aa).

Belongs to the universal ribosomal protein uL14 family. As to quaternary structure, part of the 50S ribosomal subunit. Forms a cluster with proteins L3 and L19. In the 70S ribosome, L14 and L19 interact and together make contacts with the 16S rRNA in bridges B5 and B8.

Its function is as follows. Binds to 23S rRNA. Forms part of two intersubunit bridges in the 70S ribosome. The polypeptide is Large ribosomal subunit protein uL14 (Rhizobium etli (strain CIAT 652)).